Consider the following 119-residue polypeptide: Beta-2-microglobulin (119 aa).

The first 20 residues, 1-20, serve as a signal peptide directing secretion; sequence MARFVVVALLVLLSLSGLEA. In terms of domain architecture, Ig-like C1-type spans 25-114; it reads PKIQVYSRHP…VTFSTPKTVK (90 aa). An intrachain disulfide couples cysteine 45 to cysteine 100.

Belongs to the beta-2-microglobulin family. Heterodimer of an alpha chain and a beta chain. Beta-2-microglobulin is the beta-chain of major histocompatibility complex class I molecules.

It is found in the secreted. In terms of biological role, component of the class I major histocompatibility complex (MHC). Involved in the presentation of peptide antigens to the immune system. This Callimico goeldii (Goeldi's marmoset) protein is Beta-2-microglobulin (B2M).